A 526-amino-acid chain; its full sequence is Estrogen receptor beta (526 aa).

Positions 1–145 are modulating; sequence MDIKNSPSNL…SPSSKRDAHF (145 aa). Phosphoserine; by MAPK occurs at positions 84 and 102. 2 consecutive NR C4-type zinc fingers follow at residues 146–166 and 182–206; these read CAVC…CEGC and CPAT…LRKC. Residues 146-211 constitute a DNA-binding region (nuclear receptor); sequence CAVCSDYASG…RLRKCYEVGM (66 aa). Positions 261–494 constitute an NR LBD domain; sequence SPEQLVLTLL…DLLLEMLNAH (234 aa). Positions 502–526 are disordered; the sequence is LVTGSERSRMEESESKEGSQKPQAQ. Basic and acidic residues predominate over residues 507 to 520; that stretch reads ERSRMEESESKEGS.

The protein belongs to the nuclear hormone receptor family. NR3 subfamily. In terms of assembly, binds DNA as a homodimer. Can form a heterodimer with ESR1. Interacts with NCOA1, NCOA3, NCOA5 and NCOA6 coactivators, leading to a strong increase of transcription of target genes. Interacts with UBE1C and AKAP13. Interacts with DNTTIP2. Interacts with CCDC62 in the presence of estradiol/E2; this interaction seems to enhance the transcription of target genes. Interacts with DNAAF4. Interacts with PRMT2. Interacts with CCAR2 (via N-terminus) in a ligand-independent manner. Interacts with RBM39, in the presence of estradiol (E2). Interacts with STUB1/CHIP. In terms of processing, phosphorylation at Ser-84 and Ser-102 recruits NCOA1.

The protein localises to the nucleus. Nuclear hormone receptor. Binds estrogens with an affinity similar to that of ESR1/ER-alpha, and activates expression of reporter genes containing estrogen response elements (ERE) in an estrogen-dependent manner. This Sus scrofa (Pig) protein is Estrogen receptor beta (ESR2).